Consider the following 109-residue polypeptide: MEMDLNNRLTEDETLEQAYDIFLELAMDNLDPADVILFNLQFEERGGAELFDPSEDWSEHVDFDLNPDFFAEVVIGLAETDGGEINDIFARVLLCREKDHKLCHILWRE.

The protein belongs to the putative dsDNA mimic protein family.

May act as a double-stranded DNA (dsDNA) mimic. Probably regulates the activity of a dsDNA-binding protein. This Enterobacter sp. (strain 638) protein is Putative double-stranded DNA mimic protein Ent638_2296.